Here is a 313-residue protein sequence, read N- to C-terminus: MSGIDPKRFGKVAVLFGGESAEREVSLTSGRLVLQGLRDAGVDAHPFDPAERPLSALKDEGFVRAFNALHGGYGENGQIQGALDFYGIRYTGSGVLGSALGLDKFRTKLVWQQTGVPTPPFETVMRGDDLAARATDIVAKLGLPLFVKPASEGSSVAVLKVKTADALPAALAEAATHDKIVIVEKSIEGGGEYTACIAGDLDLPLIKIVPAGEFYDYHAKYVADDTQYLIPCGLPAEQETELKRIARRAFDVLGCTDWGRADFMLDAAGNAYFLEVNTAPGMTDHSLPPKAARAVGIGYSELVVKVLSLTLND.

The ATP-grasp domain occupies 108–308; that stretch reads KLVWQQTGVP…YSELVVKVLS (201 aa). An ATP-binding site is contributed by 138–193; that stretch reads VAKLGLPLFVKPASEGSSVAVLKVKTADALPAALAEAATHDKIVIVEKSIEGGGEY. Mg(2+) contacts are provided by D262, E275, and N277.

This sequence belongs to the D-alanine--D-alanine ligase family. Mg(2+) serves as cofactor. It depends on Mn(2+) as a cofactor.

The protein localises to the cytoplasm. It catalyses the reaction 2 D-alanine + ATP = D-alanyl-D-alanine + ADP + phosphate + H(+). It functions in the pathway cell wall biogenesis; peptidoglycan biosynthesis. Its function is as follows. Cell wall formation. This Burkholderia cenocepacia (strain HI2424) protein is D-alanine--D-alanine ligase.